We begin with the raw amino-acid sequence, 159 residues long: Ribosomal RNA large subunit methyltransferase H (159 aa).

Residues Gly108 and 127–132 (FGKLTM) each bind S-adenosyl-L-methionine.

The protein belongs to the RNA methyltransferase RlmH family. Homodimer.

The protein resides in the cytoplasm. It carries out the reaction pseudouridine(1915) in 23S rRNA + S-adenosyl-L-methionine = N(3)-methylpseudouridine(1915) in 23S rRNA + S-adenosyl-L-homocysteine + H(+). Specifically methylates the pseudouridine at position 1915 (m3Psi1915) in 23S rRNA. This chain is Ribosomal RNA large subunit methyltransferase H, found in Lactobacillus helveticus (strain DPC 4571).